A 241-amino-acid polypeptide reads, in one-letter code: Protein unc-119 homolog B-B (241 aa).

The disordered stretch occupies residues 1 to 46; sequence MSGSNREAALAGQPKDERKKSGGGVINRLKARRVQGKESGTSDQSS. Tyrosine 132 contributes to the tetradecanoate binding site.

Belongs to the PDE6D/unc-119 family.

The protein localises to the cell projection. It localises to the cilium. In terms of biological role, myristoyl-binding protein that acts as a cargo adapter: specifically binds the myristoyl moiety of a subset of N-terminally myristoylated proteins and is required for their localization. Plays a key role in localization of proteins to the primary cilium membrane. The sequence is that of Protein unc-119 homolog B-B (unc119b-b) from Xenopus laevis (African clawed frog).